The chain runs to 169 residues: Crossover junction endodeoxyribonuclease RuvC (169 aa).

Residues D12, E72, and D144 contribute to the active site. 3 residues coordinate Mg(2+): D12, E72, and D144.

This sequence belongs to the RuvC family. In terms of assembly, homodimer which binds Holliday junction (HJ) DNA. The HJ becomes 2-fold symmetrical on binding to RuvC with unstacked arms; it has a different conformation from HJ DNA in complex with RuvA. In the full resolvosome a probable DNA-RuvA(4)-RuvB(12)-RuvC(2) complex forms which resolves the HJ. The cofactor is Mg(2+).

It is found in the cytoplasm. The catalysed reaction is Endonucleolytic cleavage at a junction such as a reciprocal single-stranded crossover between two homologous DNA duplexes (Holliday junction).. The RuvA-RuvB-RuvC complex processes Holliday junction (HJ) DNA during genetic recombination and DNA repair. Endonuclease that resolves HJ intermediates. Cleaves cruciform DNA by making single-stranded nicks across the HJ at symmetrical positions within the homologous arms, yielding a 5'-phosphate and a 3'-hydroxyl group; requires a central core of homology in the junction. The consensus cleavage sequence is 5'-(A/T)TT(C/G)-3'. Cleavage occurs on the 3'-side of the TT dinucleotide at the point of strand exchange. HJ branch migration catalyzed by RuvA-RuvB allows RuvC to scan DNA until it finds its consensus sequence, where it cleaves and resolves the cruciform DNA. In Xanthobacter autotrophicus (strain ATCC BAA-1158 / Py2), this protein is Crossover junction endodeoxyribonuclease RuvC.